Reading from the N-terminus, the 319-residue chain is Aspartate carbamoyltransferase catalytic subunit (319 aa).

Positions 65 and 66 each coordinate carbamoyl phosphate. K93 serves as a coordination point for L-aspartate. 3 residues coordinate carbamoyl phosphate: R115, H149, and Q152. The L-aspartate site is built by R182 and R237. Residues G278 and P279 each coordinate carbamoyl phosphate.

The protein belongs to the aspartate/ornithine carbamoyltransferase superfamily. ATCase family. Heterododecamer (2C3:3R2) of six catalytic PyrB chains organized as two trimers (C3), and six regulatory PyrI chains organized as three dimers (R2).

The catalysed reaction is carbamoyl phosphate + L-aspartate = N-carbamoyl-L-aspartate + phosphate + H(+). The protein operates within pyrimidine metabolism; UMP biosynthesis via de novo pathway; (S)-dihydroorotate from bicarbonate: step 2/3. In terms of biological role, catalyzes the condensation of carbamoyl phosphate and aspartate to form carbamoyl aspartate and inorganic phosphate, the committed step in the de novo pyrimidine nucleotide biosynthesis pathway. The polypeptide is Aspartate carbamoyltransferase catalytic subunit (Dechloromonas aromatica (strain RCB)).